The sequence spans 259 residues: MDDSVFISYCVVTGSFLGFQLLFSIISPRTFTKYSSTYRQLSFGKQCEWDSRCVSTTHALVVGSGCLYILAYDEAVNADPIWGDPFWVKMNVAITCGYLVHDLLLLARFWKVMRDPYMVCHHLAVFYSYGYVLNRGVLPYFANFRLISELSTPFVNQRWFFDVIGKPRSSWPVLLNGLAMALVFFIVRIAVIPSYYSQVFATFGTEGYIRLGIGPQVAWIVSCVVLDILNVFWMYKIARGFYKVVKAKPDGKPRRNHAD.

6 consecutive transmembrane segments (helical) span residues 6-26, 53-73, 86-106, 117-133, 172-192, and 213-233; these read FISY…FSII, CVST…LAYD, FWVK…LLLL, YMVC…GYVL, PVLL…IAVI, and IGPQ…NVFW. The 203-residue stretch at 44 to 246 folds into the TLC domain; it reads GKQCEWDSRC…IARGFYKVVK (203 aa).

This sequence belongs to the TLCD4 family.

Its subcellular location is the membrane. This chain is TLC domain-containing protein 4 (tlcd4), found in Xenopus tropicalis (Western clawed frog).